A 683-amino-acid chain; its full sequence is Long-chain-fatty-acid--CoA ligase 5 (683 aa).

The helical; Signal-anchor for type III membrane protein transmembrane segment at 12–32 (LPTPALICLLTFGTAIFLWLI) threads the bilayer. At 33-683 (NRPQPVLPLI…IKSLYESIEE (651 aa)) the chain is on the cytoplasmic side. Residue lysine 361 is modified to N6-acetyllysine.

Belongs to the ATP-dependent AMP-binding enzyme family.

The protein resides in the mitochondrion. Its subcellular location is the endoplasmic reticulum. It is found in the mitochondrion outer membrane. The protein localises to the endoplasmic reticulum membrane. It localises to the cell membrane. It catalyses the reaction a long-chain fatty acid + ATP + CoA = a long-chain fatty acyl-CoA + AMP + diphosphate. The enzyme catalyses (5Z,8Z,11Z,14Z)-eicosatetraenoate + ATP + CoA = (5Z,8Z,11Z,14Z)-eicosatetraenoyl-CoA + AMP + diphosphate. It carries out the reaction hexadecanoate + ATP + CoA = hexadecanoyl-CoA + AMP + diphosphate. The catalysed reaction is (E)-hexadec-2-enoate + ATP + CoA = (2E)-hexadecenoyl-CoA + AMP + diphosphate. It catalyses the reaction 15-hydroxy-(5Z,8Z,11Z,13E)-eicosatetraenoate + ATP + CoA = 15-hydroxy-(5Z,8Z,11Z,13E)-eicosatetraenoyl-CoA + AMP + diphosphate. The enzyme catalyses 12-hydroxy-(5Z,8Z,10E,14Z)-eicosatetraenoate + ATP + CoA = 12-hydroxy-(5Z,8Z,10E,14Z)-eicosatetraenoyl-CoA + AMP + diphosphate. It carries out the reaction 5-hydroxy-(6E,8Z,11Z,14Z)-eicosatetraenoate + ATP + CoA = 5-hydroxy-(6E,8Z,11Z,14Z)-eicosatetraenoyl-CoA + AMP + diphosphate. The catalysed reaction is 14,15-epoxy-(5Z,8Z,11Z)-eicosatrienoate + ATP + CoA = 14,15-epoxy-(5Z,8Z,11Z)-eicosatrienoyl-CoA + AMP + diphosphate. It catalyses the reaction 11,12-epoxy-(5Z,8Z,14Z)-eicosatrienoate + ATP + CoA = 11,12-epoxy-(5Z,8Z,14Z)-eicosatrienoyl-CoA + AMP + diphosphate. The enzyme catalyses (9Z)-octadecenoate + ATP + CoA = (9Z)-octadecenoyl-CoA + AMP + diphosphate. Its function is as follows. Catalyzes the conversion of long-chain fatty acids to their active form acyl-CoAs for both synthesis of cellular lipids, and degradation via beta-oxidation. ACSL5 may activate fatty acids from exogenous sources for the synthesis of triacylglycerol destined for intracellular storage. It was suggested that it may also stimulate fatty acid oxidation. At the villus tip of the crypt-villus axis of the small intestine may sensitize epithelial cells to apoptosis specifically triggered by the death ligand TRAIL. May have a role in the survival of glioma cells. Utilizes a wide range of saturated fatty acids with a preference for C16-C18 unsaturated fatty acids. The chain is Long-chain-fatty-acid--CoA ligase 5 from Mus musculus (Mouse).